We begin with the raw amino-acid sequence, 311 residues long: 3-oxo-4,17-pregnadiene-20-carboxyl-CoA hydratase alpha subunit (311 aa).

The DUF35 stretch occupies residues 198-295 (WDGVKAHELR…VAIGMPVRAT (98 aa)).

It belongs to the thioester dehydratase family. Heterodimer composed of ChsH1 and ChsH2. Two heterodimers combine to form a heterotetramer. The complex interacts with Ltp2 via the DUF35 C-terminal region of ChsH2. The ChsH1-ChsH2-Ltp2 protein complex is composed of two protomers that form a heterohexameric structure through the Ltp2 dimerization interface.

The enzyme catalyses 3-oxochola-4,17-dien-22-oyl-CoA + H2O = 17-hydroxy-3-oxochol-4-en-22-oyl-CoA. It carries out the reaction (2E)-octenoyl-CoA + H2O = 3-hydroxyoctanoyl-CoA. It catalyses the reaction (2E)-decenoyl-CoA + H2O = 3-hydroxydecanoyl-CoA. It participates in steroid metabolism; cholesterol degradation. In the absence of the Ltp2 aldolase, ChsH1/ChsH2 can hydrate only about 30% of the 3-OPDC-CoA substrate. Complete turnover requires the presence of Ltp2. In terms of biological role, involved in cholesterol side chain degradation. Catalyzes the hydration of 3-oxo-4,17-pregnadiene-20-carboxyl-CoA (3-OPDC-CoA) to form 17-hydroxy-3-oxo-4-pregnene-20-carboxyl-CoA (17-HOPC-CoA), in the modified beta-oxidation pathway for cholesterol side chain degradation. Can also use octenoyl-CoA and decenoyl-CoA, with lower efficiency. The chain is 3-oxo-4,17-pregnadiene-20-carboxyl-CoA hydratase alpha subunit from Mycobacterium tuberculosis (strain ATCC 25618 / H37Rv).